Consider the following 503-residue polypeptide: Cardiolipin synthase (503 aa).

The next 3 helical transmembrane spans lie at 5 to 25 (LNVLAFFALLFAALYISRGFL), 30 to 50 (VGTLSVVFTLSVIFIGIIIFF), and 59 to 79 (LTWLLVLAAFPVVGFFFYLMF). PLD phosphodiesterase domains lie at 238-265 (INYRNHRKIIVIDGVVGFVGGLNIGDEY) and 416-443 (NRGFMHSKIIIVDHEIASIGTSNMDMRS). Residues His243, Lys245, Asp250, His421, Lys423, and Asp428 contribute to the active site.

Belongs to the phospholipase D family. Cardiolipin synthase subfamily.

Its subcellular location is the cell membrane. It carries out the reaction 2 a 1,2-diacyl-sn-glycero-3-phospho-(1'-sn-glycerol) = a cardiolipin + glycerol. Functionally, catalyzes the reversible phosphatidyl group transfer from one phosphatidylglycerol molecule to another to form cardiolipin (CL) (diphosphatidylglycerol) and glycerol. This chain is Cardiolipin synthase (cls), found in Alkalihalophilus pseudofirmus (strain ATCC BAA-2126 / JCM 17055 / OF4) (Bacillus pseudofirmus).